The chain runs to 221 residues: Ribonuclease S-2 (221 aa).

A signal peptide spans 1 to 20; it reads MIYIFTMVFSLNVLILSSSA. Q31 provides a ligand contact to RNA. A disulfide bond links C37 and C44. Residues H55, 91–92, F101, 104–105, and 108–109 contribute to the RNA site; these read NV, KQ, and KH. The Proton donor role is filled by H55. Cysteines 70 and 112 form a disulfide. An N-linked (GlcNAc...) asparagine glycan is attached at N91. The active site involves Q105. Catalysis depends on H109, which acts as the Proton acceptor. Residues N137, N153, and N195 are each glycosylated (N-linked (GlcNAc...) asparagine). 2 cysteine pairs are disulfide-bonded: C176/C214 and C191/C202.

It belongs to the RNase T2 family. N-linked core structure at Asn-91, Asn-137, and Asn-153 contains xylose and at Asn-195 contains xylose and fucose.

The protein resides in the secreted. It localises to the extracellular space. It carries out the reaction a ribonucleotidyl-ribonucleotide-RNA + H2O = a 3'-end 3'-phospho-ribonucleotide-RNA + a 5'-end dephospho-ribonucleoside-RNA + H(+). Functionally, self-incompatibility (SI) is the inherited ability of a flowering plant to prevent self-fertilization by discriminating between self and non-self pollen during pollination. In many species, self-incompatibility is controlled by the single, multiallelic locus S. In Pyrus pyrifolia (Chinese pear), this protein is Ribonuclease S-2.